Consider the following 283-residue polypeptide: Calpastatin (283 aa).

Positions 1–15 (MNPTETKAIPVSQQM) are enriched in polar residues. 2 disordered regions span residues 1 to 186 (MNPT…SDPM) and 212 to 283 (NEGI…KVEK). The span at 21-30 (PNKKKHKKQA) shows a compositional bias: basic residues. Lysine 32 participates in a covalent cross-link: Glycyl lysine isopeptide (Lys-Gly) (interchain with G-Cter in SUMO2). Basic and acidic residues predominate over residues 46–65 (VVHEKKSQEGKPKEHTEQKS). N6-acetyllysine is present on lysine 50. Serine 87 bears the Phosphoserine mark. The span at 107-122 (VSAGGESVAGVAATSG) shows a compositional bias: low complexity. The residue at position 133 (serine 133) is a Phosphoserine. Threonine 135 carries the post-translational modification Phosphothreonine. The Inhibitory domain 1 repeat unit spans residues 170–222 (IEEENTTYTGPEVSDPMSSTYIEELGKREVTIPPKYRELLAKNEGITGPPADS). A phosphoserine mark is found at serine 222 and serine 243. Residues 249-258 (KKTEKEESTE) show a composition bias toward basic and acidic residues.

It belongs to the protease inhibitor I27 (calpastatin) family.

In terms of biological role, specific inhibition of calpain (calcium-dependent cysteine protease). Plays a key role in postmortem tenderization of meat and have been proposed to be involved in muscle protein degradation in living tissue. The polypeptide is Calpastatin (CAST) (Chlorocebus aethiops (Green monkey)).